We begin with the raw amino-acid sequence, 128 residues long: Ribosome-binding factor A (128 aa).

Belongs to the RbfA family. Monomer. Binds 30S ribosomal subunits, but not 50S ribosomal subunits or 70S ribosomes.

The protein localises to the cytoplasm. Its function is as follows. One of several proteins that assist in the late maturation steps of the functional core of the 30S ribosomal subunit. Associates with free 30S ribosomal subunits (but not with 30S subunits that are part of 70S ribosomes or polysomes). Required for efficient processing of 16S rRNA. May interact with the 5'-terminal helix region of 16S rRNA. The protein is Ribosome-binding factor A of Acidithiobacillus ferrooxidans (strain ATCC 23270 / DSM 14882 / CIP 104768 / NCIMB 8455) (Ferrobacillus ferrooxidans (strain ATCC 23270)).